The sequence spans 238 residues: Large ribosomal subunit protein uL3 (238 aa).

This sequence belongs to the universal ribosomal protein uL3 family. In terms of assembly, part of the 50S ribosomal subunit. Forms a cluster with proteins L14 and L19.

Functionally, one of the primary rRNA binding proteins, it binds directly near the 3'-end of the 23S rRNA, where it nucleates assembly of the 50S subunit. The chain is Large ribosomal subunit protein uL3 from Mesoplasma florum (strain ATCC 33453 / NBRC 100688 / NCTC 11704 / L1) (Acholeplasma florum).